The following is a 46-amino-acid chain: uncharacterized protein (46 aa).

The protein resides in the plastid. It localises to the chloroplast. This is an uncharacterized protein from Trieres chinensis (Marine centric diatom).